A 596-amino-acid chain; its full sequence is Arginine--tRNA ligase (596 aa).

The 'HIGH' region signature appears at proline 123–histidine 133.

Belongs to the class-I aminoacyl-tRNA synthetase family. In terms of assembly, monomer.

The protein localises to the cytoplasm. The catalysed reaction is tRNA(Arg) + L-arginine + ATP = L-arginyl-tRNA(Arg) + AMP + diphosphate. This Amoebophilus asiaticus (strain 5a2) protein is Arginine--tRNA ligase.